Consider the following 877-residue polypeptide: Dystroglycan 1 (877 aa).

The signal sequence occupies residues 1–29 (MRMSAGLSLLIPLWGRTFLLLLSVAVTQS). Positions 30-408 (RWPSEPSDAV…GHIRPTMTIP (379 aa)) are required for laminin recognition. The interval 49-71 (SMHSVLSDLHEAVPTVVGIPDGT) is O-glycosylated at one site. Residue Asn141 is glycosylated (N-linked (GlcNAc...) asparagine). Residues Cys182 and Cys264 are joined by a disulfide bond. The segment at 316–468 (ATPTPVTAIG…PPTRIRTTTS (153 aa)) is mucin-like domain. 3 O-linked (Man6P...) threonine glycosylation sites follow: Thr317, Thr319, and Thr379. Disordered regions lie at residues 380 to 444 (PTLG…PVPR) and 458 to 480 (SPPTRIRTTTSGLPRGEPNQRPE). Positions 413–433 (PTAVATPPTPTTKNPRVSXPT) are enriched in low complexity. The tract at residues 446-468 (TTKAPITRLETASPPTRIRTTTS) is O-glycosylated at seven sites with GalNAc. One can recognise a Peptidase S72 domain in the interval 585–694 (RAPARFTAKF…MSIAVTGSGS (110 aa)). N-linked (GlcNAc...) asparagine glycosylation is found at Asn623, Asn631, and Asn643. Cys651 and Cys695 are joined by a disulfide. Residues 706-717 (PKRVPSEAPPTE) show a composition bias toward pro residues. The disordered stretch occupies residues 706–727 (PKRVPSEAPPTEVPDRDPEKSS). The segment covering 718 to 727 (VPDRDPEKSS) has biased composition (basic and acidic residues). Residues 732-757 (YLHTVIPAVVVAAILLIAGIIAMICY) form a helical membrane-spanning segment. Positions 758-764 (RKKRKGK) match the Nuclear localization signal motif. Position 772 is a phosphothreonine (Thr772). Positions 801 to 877 (LQEEKAPLPP…YRSPPPYVPP (77 aa)) are required for interaction with CAV3. The disordered stretch occupies residues 805 to 877 (KAPLPPPEYP…YRSPPPYVPP (73 aa)). Residues 814 to 828 (PNQSVPETTPLNQDT) show a composition bias toward polar residues. A compositionally biased stretch (pro residues) spans 841–852 (NAPPYQPPPPFT). The required for binding DMD and UTRN stretch occupies residues 862–877 (PKNMTPYRSPPPYVPP). The PPXY motif signature appears at 871 to 874 (PPPY). The residue at position 874 (Tyr874) is a Phosphotyrosine; by SRC.

As to quaternary structure, monomer. Heterodimer of alpha- and beta-dystroglycan subunits which are the central components of the dystrophin-glycoprotein complex. This complex then can form a dystrophin-associated glycoprotein complex (DGC) which is composed of three subcomplexes: a cytoplasmic complex comprised of DMD (or UTRN), DTNA and a number of syntrophins, such as SNTB1, SNTB2, SNTG1 and SNTG2, the transmembrane dystroglycan complex, and the sarcoglycan-sarcospan complex. Interacts (via the N-terminal of alphaDAG1) with LARGE1; the interaction enhances laminin binding. Interacts with SGCD. Interacts with AGR2 and AGR3. Interacts (betaDAG1) with DMD; the interaction is inhibited by phosphorylation on the PPXY motif. Interacts (betaDAG1, via its PPXY motif) with UTRN (via its WWW and ZZ domains); the interaction is inhibited by phosphorylation on the PPXY motif. Interacts (betaDAG1, via its phosphorylated PPXY motif) with the SH2 domain-containing proteins, FYN, CSK, NCK and SHC. Interacts (betaDAG1) with CAV3 (via a central WW-like domain); the interaction disrupts the binding of DMD. BetaDAG1 directly interacts with ANK3, but not with ANK2; this interaction does not interfere with DMD-binding and is required for retention at costameres. Identified in a dystroglycan complex that contains at least PRX, DRP2, UTRN, DMD and DAG1. Interacts with POMGNT1. BetaDAG1 interacts with CD93. In terms of processing, O-glycosylated. POMGNT1 catalyzes the initial addition of N-acetylglucosamine, giving rise to the GlcNAc(beta1-2)Man(alpha1-)O-Ser/Thr moiety and thus providing the necessary basis for the addition of further carbohydrate moieties. Heavily O-glycosylated comprising of up to two thirds of its mass and the carbohydrate composition differs depending on tissue type. Mucin-type O-glycosylation is important for ligand binding activity. O-mannosylation of alpha-DAG1 is found in high abundance in both brain and muscle where the most abundant glycan is Sia-alpha-2-3-Gal-beta-1-4-Glc-NAc-beta-1-2-Man. In muscle, glycosylation on Thr-317, Thr-319 and Thr-379 by a phosphorylated O-mannosyl glycan with the structure 2-(N-acetylamido)-2-deoxygalactosyl-beta-1,3-2-(N-acetylamido)-2-deoxyglucosyl-beta-1,4-6-phosphomannose is mediated by like-acetylglucosaminyltransferase (LARGE1) protein amd is required for laminin binding. O-glycosylated in the N-terminal region with a core 1 or possibly core 8 glycan. The brain form displays a unique glycosylation pattern which is absent in other tissues; this form shows enhanced binding to laminin LAMA5 compared to the skeletal muscle form. Post-translationally, N-glycosylated. Autolytic cleavage produces the alpha and beta subunits. In cutaneous cells, as well as in certain pathological conditions, shedding of beta-dystroglycan can occur releasing a peptide of about 30 kDa. In terms of processing, SRC-mediated phosphorylation of the PPXY motif of the beta subunit recruits SH2 domain-containing proteins, but inhibits binding to WWW domain-containing proteins, DMD and UTRN. This phosphorylation also inhibits nuclear entry.

The protein resides in the secreted. The protein localises to the extracellular space. It localises to the cell membrane. It is found in the cytoplasm. Its subcellular location is the cytoskeleton. The protein resides in the nucleus. The protein localises to the nucleoplasm. It localises to the sarcolemma. It is found in the postsynaptic cell membrane. In terms of biological role, the dystroglycan complex is involved in a number of processes including laminin and basement membrane assembly, sarcolemmal stability, cell survival, peripheral nerve myelination, nodal structure, cell migration, and epithelial polarization. Functionally, extracellular peripheral glycoprotein that acts as a receptor for extracellular matrix proteins containing laminin-G domains. Receptor for laminin-2 (LAMA2) and agrin in peripheral nerve Schwann cells. Also acts as a receptor for laminin LAMA5. Its function is as follows. Transmembrane protein that plays important roles in connecting the extracellular matrix to the cytoskeleton. Acts as a cell adhesion receptor in both muscle and non-muscle tissues. Receptor for both DMD and UTRN and, through these interactions, scaffolds axin to the cytoskeleton. Also functions in cell adhesion-mediated signaling and implicated in cell polarity. This chain is Dystroglycan 1, found in Sus scrofa (Pig).